Reading from the N-terminus, the 282-residue chain is MTIQWFPGHMAKARREVTEKLKLIDIVYELVDARIPMSSRNPMIEDILKNKPRIMLLNKADKADAAVTQQWKEHFENQGIRSLSINSVNGQGLNQIVPASKEILQEKFDRMRAKGVKPRAIRALIIGIPNVGKSTLINRLAKKNIAKTGDRPGITTSQQWVKVGKELELLDTPGILWPKFEDELVGLRLAVTGAIKDSIINLQDVAVFGLRFLEEHYPERLKERYGLDEIPEDIAELFDAIGEKRGCLMSGGLINYDKTTEVIIRDIRTEKFGRLSFEQPTM.

The CP-type G domain occupies 14 to 178; it reads RREVTEKLKL…LLDTPGILWP (165 aa). GTP-binding positions include 58–61, 86–87, 130–135, and glycine 174; these read NKAD, NS, and NVGKST.

The protein belongs to the TRAFAC class YlqF/YawG GTPase family. MTG1 subfamily. In terms of assembly, interacts with ctc. Interacts with the immature 50S ribosome subunit. 2 molecules of RbgA bind to one 50S subunit.

The protein localises to the cytoplasm. Essential protein that is required for a late step of 50S ribosomal subunit assembly. Has GTPase activity that is stimulated by interaction with the immature 50S ribosome subunit. Binds to the 23S rRNA. Required for the association of ribosomal proteins RplP and RpmA with the large subunit. This Bacillus subtilis (strain 168) protein is Ribosome biogenesis GTPase A (rbgA).